The primary structure comprises 376 residues: Pre-mRNA-splicing factor cwf25 (376 aa).

Residues 25–60 (KDEQAHKEEMKRVEQLRREIEEERQLLELHRLQEAA) adopt a coiled-coil conformation. Disordered stretches follow at residues 153 to 211 (LMEK…DRNN) and 258 to 289 (RTSRQYSRSPSPDFRTRNHQFHSRDSQPITQR). Over residues 154-167 (MEKRKYSLDSDRKS) the composition is skewed to basic and acidic residues. Residues 168-178 (KERRHRDRHHR) show a composition bias toward basic residues. Residues 179–199 (SNQDRSRERSDNEQHSSDKRE) show a composition bias toward basic and acidic residues. 2 positions are modified to phosphoserine: Ser266 and Ser268. A coiled-coil region spans residues 286 to 334 (ITQRHTDIESRLQKMQDNAKELDESRRKKIELLEKKERDEEQFLEKERR).

The protein belongs to the CWC25 family. Belongs to the 40S cdc5-associated complex (or cwf complex), a spliceosome sub-complex reminiscent of a late-stage spliceosome composed of the U2, U5 and U6 snRNAs and at least brr2, cdc5, cwf2/prp3, cwf3/syf1, cwf4/syf3, cwf5/ecm2, spp42/cwf6, cwf7/spf27, cwf8, cwf9, cwf10, cwf11, cwf12, prp45/cwf13, cwf14, cwf15, cwf16, cwf17, cwf18, cwf19, cwf20, cwf21, cwf22, cwf23, cwf24, cwf25, cwf26, cyp7/cwf27, cwf28, cwf29/ist3, lea1, msl1, prp5/cwf1, prp10, prp12/sap130, prp17, prp22, sap61, sap62, sap114, sap145, slu7, smb1, smd1, smd3, smf1, smg1 and syf2.

It is found in the nucleus. In terms of biological role, involved in mRNA splicing. This is Pre-mRNA-splicing factor cwf25 (cwf25) from Schizosaccharomyces pombe (strain 972 / ATCC 24843) (Fission yeast).